We begin with the raw amino-acid sequence, 287 residues long: NADH-cytochrome b5 reductase 1 (287 aa).

A helical transmembrane segment spans residues 5 to 25 (FEALVTALVLAVSFIFIYGKF). An FAD-binding FR-type domain is found at 41–145 (KDWQEFSLLT…RGPKGFYHYE (105 aa)). FAD contacts are provided by residues 125–142 (AELA…KGFY) and 151–183 (EIGM…RVCL).

This sequence belongs to the flavoprotein pyridine nucleotide cytochrome reductase family. In terms of assembly, monomer. Component of the 2-(3-amino-3-carboxypropyl)histidine synthase complex composed of DPH1, DPH2, DPH3 and a NADH-dependent reductase, predominantly CBR1. Requires FAD as cofactor.

It localises to the mitochondrion outer membrane. It carries out the reaction 2 Fe(III)-[cytochrome b5] + NADH = 2 Fe(II)-[cytochrome b5] + NAD(+) + H(+). The enzyme catalyses 2 Fe(3+)-[Dph3] + NADH = 2 Fe(2+)-[Dph3] + NAD(+) + H(+). The protein operates within protein modification; peptidyl-diphthamide biosynthesis. Functionally, NADH-dependent reductase for DPH3 and cytochrome b5. Required for the first step of diphthamide biosynthesis, a post-translational modification of histidine which occurs in elongation factor 2. DPH1 and DPH2 transfer a 3-amino-3-carboxypropyl (ACP) group from S-adenosyl-L-methionine (SAM) to a histidine residue, the reaction is assisted by a reduction system comprising DPH3 and a NADH-dependent reductase, predominantly CBR1. By reducing DPH3, also involved in the formation of the tRNA wobble base modification mcm5s 2U (5-methoxycarbonylmethyl-2-thiouridine), mediated by the elongator complex. The cytochrome b5/NADH cytochrome b5 reductase electron transfer system supports the catalytic activity of several sterol biosynthetic enzymes. This Eremothecium gossypii (strain ATCC 10895 / CBS 109.51 / FGSC 9923 / NRRL Y-1056) (Yeast) protein is NADH-cytochrome b5 reductase 1 (CBR1).